A 271-amino-acid polypeptide reads, in one-letter code: Aquaporin-2 (271 aa).

Topologically, residues 1–11 (MWELRSIAFSR) are cytoplasmic. Residues 12 to 32 (AVLAEFLATLLFVFFGLGSAL) form a helical membrane-spanning segment. The Extracellular portion of the chain corresponds to 33-40 (NWPQALPS). Residues 41–59 (VLQIAMAFGLAIGTLVQAL) form a helical membrane-spanning segment. Residues 60–64 (GHVSG) lie on the Cytoplasmic side of the membrane. The discontinuously helical intramembrane region spans 65–74 (AHINPAVTVA). Residues 68–70 (NPA) carry the NPA 1 motif. Residues 75 to 85 (CLVGCHVSFLR) lie on the Cytoplasmic side of the membrane. The chain crosses the membrane as a helical span at residues 86 to 107 (AVFYVAAQLLGAVAGAALLHEI). The Extracellular segment spans residues 108–127 (TPPAIRGDLAVNALNNNSTA). Asn-123 carries N-linked (GlcNAc...) asparagine glycosylation. The helical transmembrane segment at 128-148 (GQAVTVELFLTLQLVLCIFAS) threads the bilayer. The Cytoplasmic segment spans residues 149-156 (TDERRGDN). The helical transmembrane segment at 157–176 (VGTPALSIGFSVALGHLLGI) threads the bilayer. Topologically, residues 177–180 (HYTG) are extracellular. Residues 181–193 (CSMNPARSLAPAI) constitute an intramembrane region (discontinuously helical). The NPA 2 signature appears at 184-186 (NPA). At 194 to 201 (VTGKFDDH) the chain is on the extracellular side. Residues 202-222 (WVFWIGPLVGAIVASLLYNYV) traverse the membrane as a helical segment. The Cytoplasmic portion of the chain corresponds to 223 to 271 (LFPPAKSLSERLAVLKGLEPDTDWEEREVRRRQSVELHSPQSLPRGSKA). The segment at 251-271 (VRRRQSVELHSPQSLPRGSKA) is disordered. At Ser-256 the chain carries Phosphoserine. Residues 261–271 (SPQSLPRGSKA) are compositionally biased toward polar residues.

Belongs to the MIP/aquaporin (TC 1.A.8) family. Homotetramer. In terms of processing, ser-256 phosphorylation is necessary and sufficient for expression at the apical membrane. Endocytosis is not phosphorylation-dependent. N-glycosylated.

It is found in the apical cell membrane. The protein resides in the basolateral cell membrane. Its subcellular location is the cell membrane. It localises to the cytoplasmic vesicle membrane. The protein localises to the golgi apparatus. It is found in the trans-Golgi network membrane. It carries out the reaction H2O(in) = H2O(out). The catalysed reaction is glycerol(in) = glycerol(out). Functionally, forms a water-specific channel that provides the plasma membranes of renal collecting duct with high permeability to water, thereby permitting water to move in the direction of an osmotic gradient. Could also be permeable to glycerol. In Bos taurus (Bovine), this protein is Aquaporin-2.